A 243-amino-acid polypeptide reads, in one-letter code: Cell division protein FtsQ (243 aa).

Topologically, residues 1-19 (MKRYNAKRKTHRNLKSIKK) are cytoplasmic. Residues 20-40 (LIPTVLALLAFVSLLAGIITL) form a helical membrane-spanning segment. Residues 41–243 (HNPKTLPFRQ…SNGLAIQWKN (203 aa)) lie on the Periplasmic side of the membrane. In terms of domain architecture, POTRA spans 46-115 (LPFRQIKITV…NELEIQVEEQ (70 aa)).

This sequence belongs to the FtsQ/DivIB family. FtsQ subfamily. Part of a complex composed of FtsB, FtsL and FtsQ.

Its subcellular location is the cell inner membrane. Functionally, essential cell division protein. May link together the upstream cell division proteins, which are predominantly cytoplasmic, with the downstream cell division proteins, which are predominantly periplasmic. May control correct divisome assembly. This chain is Cell division protein FtsQ, found in Coxiella burnetii (strain RSA 493 / Nine Mile phase I).